Reading from the N-terminus, the 1784-residue chain is Sodium channel protein type 4 subunit alpha B (1784 aa).

Topologically, residues 1–130 (MARLLPPTGT…RAAIRILIHS (130 aa)) are cytoplasmic. The disordered stretch occupies residues 29–48 (AEEAAEQERMKEQNVKVAEE). The I repeat unit spans residues 112–429 (CLSPFNPVRR…VVAMAYAEQN (318 aa)). The helical transmembrane segment at 131-149 (LFSLVIMLTILTNCVFMAM) threads the bilayer. The Extracellular segment spans residues 150–156 (SDPPGWS). The helical transmembrane segment at 157-177 (KILEYVFTGIYTFEAMVKVLS) threads the bilayer. Topologically, residues 178 to 191 (RGFCIGDFTFLRDP) are cytoplasmic. The helical transmembrane segment at 192-209 (WNWLDFMVISMAYLTEFV) threads the bilayer. Over 210–215 (DLGNIS) the chain is Extracellular. A glycan (N-linked (GlcNAc...) asparagine) is linked at Asn213. A helical transmembrane segment spans residues 216–232 (ALRTFRVLRALKTITVI). Residues 233-251 (PGLKTIVGALIQSVKKLAD) are Cytoplasmic-facing. Residues 252 to 271 (VMILTVFCLSVFALIGLQLF) traverse the membrane as a helical segment. Topologically, residues 272–366 (MGNLRQKCVL…PNYGYTSYDN (95 aa)) are extracellular. A disulfide bridge links Cys279 with Cys335. Residues Asn291, Asn304, and Asn337 are each glycosylated (N-linked (GlcNAc...) asparagine). Cys344 and Cys350 are oxidised to a cystine. The segment at residues 367 to 391 (FGWAFLALFRLMTQDFWENLFQLTL) is an intramembrane region (pore-forming). At 392 to 398 (RAAGKTY) the chain is on the extracellular side. A helical transmembrane segment spans residues 399–419 (MIFFVVIIFLGSFYLINLILA). Over 420-568 (VVAMAYAEQN…RIVYLFVMDP (149 aa)) the chain is Cytoplasmic. Residues 455 to 478 (EQKNGMVNGSKTSLSSKKKGDNDQ) are disordered. Residues 550–821 (CCIPWVKFKR…QIAISRITRG (272 aa)) form an II repeat. A helical membrane pass occupies residues 569–587 (FVDLGITLCIVLNTVFMAM). The Extracellular segment spans residues 588 to 598 (EHYPMSVHVEE). The chain crosses the membrane as a helical span at residues 599-618 (VLAIGNLVFTGIFAAEMVLK). The Cytoplasmic segment spans residues 619–632 (LIALDPYYYFQVGW). Residues 633-652 (NIFDSIIVTMSLVELMLADV) form a helical membrane-spanning segment. The Extracellular portion of the chain corresponds to 653-654 (EG). The chain crosses the membrane as a helical span at residues 655 to 672 (LSVLRSFRLMRVFKLAKS). Residues 673–688 (WPTLNMLIKIIGNSVG) are Cytoplasmic-facing. The chain crosses the membrane as a helical span at residues 689 to 707 (ALGNLTLVLAIIVFIFAVV). Over 708-736 (GMQLFGKSYTDSVCKISSDCELPRWHMAD) the chain is Extracellular. An intrachain disulfide couples Cys721 to Cys727. Residues 737 to 757 (FFHAFLIIFRVLCGEWIETMW) constitute an intramembrane region (pore-forming). Over 758–768 (DCMEVAGQGMC) the chain is Extracellular. Cys759 and Cys768 are joined by a disulfide. The chain crosses the membrane as a helical span at residues 769–787 (IIVFMMVMVIGNLVVLNLF). Residues 788 to 973 (LALLLSSFSG…TCFAIVEHSY (186 aa)) are Cytoplasmic-facing. Residues 870–928 (PIANGESDDDDGNGSSEDEDDEGRDINMKKKNGDESSTCSTVDKPPEVEDLVEEEEEDL) form a disordered region. A compositionally biased stretch (acidic residues) spans 875–892 (ESDDDDGNGSSEDEDDEG). The span at 893-903 (RDINMKKKNGD) shows a compositional bias: basic and acidic residues. Acidic residues predominate over residues 917–928 (VEDLVEEEEEDL). Residues 954–1269 (KGKAWWNFRK…KKYYNAMKKL (316 aa)) form an III repeat. The chain crosses the membrane as a helical span at residues 974–991 (FETFIIFMILLSSGALAF). Residues 992–1004 (EDIYIEQRRMIKI) are Extracellular-facing. Residues 1005-1023 (ILEYADQVFTYVFVVEMLL) traverse the membrane as a helical segment. Residues 1024 to 1037 (KWVAYGFKVYFTNA) lie on the Cytoplasmic side of the membrane. The helical transmembrane segment at 1038–1056 (WCWLDFLIVDVSLISLTAN) threads the bilayer. Topologically, residues 1057-1064 (ILGYSELG) are extracellular. The helical transmembrane segment at 1065-1083 (AIKSLRTLRALRPLRALSR) threads the bilayer. Residues 1084 to 1101 (FEGMRVVVVNALVGAIPS) lie on the Cytoplasmic side of the membrane. The helical transmembrane segment at 1102–1121 (IFNVLLVCLIFWLIFSIMGV) threads the bilayer. The Extracellular segment spans residues 1122–1173 (NLFAGKFYYCFNETSEEVFDHNVVNNKTDCYELMEFHPEVRWMNGKINFDNV). Cys1131 and Cys1151 are oxidised to a cystine. N-linked (GlcNAc...) asparagine glycosylation is found at Asn1133 and Asn1147. Positions 1174–1195 (GMGYLALLQVATFKGWMDIMYS) form an intramembrane region, pore-forming. Topologically, residues 1196-1212 (AVDSRAIESQPVYEANL) are extracellular. Residues 1213-1234 (YMYIYFVIFIIFGSFFTLNLFI) form a helical membrane-spanning segment. The Cytoplasmic portion of the chain corresponds to 1235–1297 (GVIIDNFNQQ…LVFDFVTQQF (63 aa)). The interval 1253–1255 (IFM) is important for rapid channel inactivation. Residues 1278-1575 (IPRPTNCCQG…WEKFDPTASQ (298 aa)) form an IV repeat. A helical membrane pass occupies residues 1298-1315 (FDIFIMVMICLNMVTMMV). Over 1316-1326 (ETDDQSAEIEE) the chain is Extracellular. Residues 1327–1345 (ILFYINFAFIILFTGECVL) traverse the membrane as a helical segment. Topologically, residues 1346–1357 (KITALRYHYFSI) are cytoplasmic. The chain crosses the membrane as a helical span at residues 1358 to 1375 (GWNIFDFVVVILSILGIG). The Extracellular segment spans residues 1376–1388 (LADLIEKYFVSPT). The chain crosses the membrane as a helical span at residues 1389-1405 (LFRVIRLARIGRVLRLI). Residues 1406–1424 (RGAKGIRTLLFALMMSLPA) lie on the Cytoplasmic side of the membrane. Residues 1425 to 1442 (LFNIGLLLFLIMFIFSIF) form a helical membrane-spanning segment. Residues 1443 to 1464 (GMSNFAYVKKEVGIDDMMNFET) lie on the Extracellular side of the membrane. An intramembrane region (pore-forming) is located at residues 1465–1487 (FGNSIICMFMITTSAGWDGLLAP). Residues 1488 to 1516 (ILNSPPDCDPDVDNPGSTTRGNCGNAAVG) are Extracellular-facing. Cys1495 and Cys1510 are disulfide-bonded. A helical transmembrane segment spans residues 1517–1539 (IVFFCSYIVMSFLVVVNMYIAII). The Cytoplasmic portion of the chain corresponds to 1540 to 1784 (LENFNVATEE…AADNLRESIV (245 aa)). The region spanning 1669-1698 (EEVAASTIQRAYRSHILKRCVKQASYMYRD) is the IQ domain.

This sequence belongs to the sodium channel (TC 1.A.1.10) family. Nav1.4/SCN4A subfamily. Voltage-gated sodium (Nav) channels consist of an ion-conducting alpha subunit which is functional on its own associated with regulatory beta subunits. Lacks the cysteine which covalently binds the conotoxin GVIIJ. This cysteine (position 719) is speculated in other sodium channel subunits alpha to be implied in covalent binding with the sodium channel subunit beta-2 or beta-4. As to expression, expressed in skeletal muscle, heart, brain, spinal cord, and eye.

Its subcellular location is the cell membrane. It catalyses the reaction Na(+)(in) = Na(+)(out). Functionally, pore-forming subunit of a voltage-gated sodium (Nav) channel that directly mediates the depolarizing phase of action potentials in excitable membranes. Navs, also called VGSCs (voltage-gated sodium channels) or VDSCs (voltage-dependent sodium channels), operate by switching between closed and open conformations depending on the voltage difference across the membrane. In the open conformation they allow Na(+) ions to selectively pass through the pore, along their electrochemical gradient. The influx of Na+ ions provokes membrane depolarization, initiating the propagation of electrical signals throughout cells and tissues. The polypeptide is Sodium channel protein type 4 subunit alpha B (scn4ab) (Danio rerio (Zebrafish)).